A 392-amino-acid polypeptide reads, in one-letter code: Zinc finger protein CONSTANS-LIKE 7 (392 aa).

Residues cysteine 22, cysteine 25, cysteine 46, and histidine 51 each coordinate Zn(2+). The B box-type; atypical zinc-finger motif lies at 22 to 65 (CDACMKRSRASWYCPADDAFLCQSCDASIHSANHLAKRHERVRL). Residues 226–254 (KEENKVGFEINCKDLKRVKDEDEEEEEAK) are a coiled coil. Disordered stretches follow at residues 246 to 271 (EDEE…SNDK) and 326 to 346 (SDGS…GERE). Residues 259 to 271 (GSKDSDREASNDK) show a composition bias toward basic and acidic residues. The CCT domain occupies 345–387 (REARVLRYKEKRRTRLFSKKIRYEVRKLNAEQRPRIKGRFVKR).

It belongs to the CONSTANS family.

Its subcellular location is the nucleus. The polypeptide is Zinc finger protein CONSTANS-LIKE 7 (COL7) (Arabidopsis thaliana (Mouse-ear cress)).